Reading from the N-terminus, the 622-residue chain is Condensin-2 complex subunit H2 (622 aa).

Thr19 is subject to Phosphothreonine. A phosphoserine mark is found at Ser95, Ser199, Ser223, and Ser227. Positions Trp207–Ala354 are disordered. Positions Ala262 to Val273 are enriched in low complexity. Ser282 bears the Phosphoserine mark. A compositionally biased stretch (basic and acidic residues) spans Thr294–Pro312.

It belongs to the CND2 H2 (condensin-2 subunit 2) family. As to quaternary structure, component of the condensin-2 complex, which contains the SMC2 and SMC4 heterodimer, and three non SMC subunits, NCAPG2, NCAPH2 and NCAPD3 that probably regulate the complex.

Its subcellular location is the nucleus. In terms of biological role, regulatory subunit of the condensin-2 complex, a complex that seems to provide chromosomes with an additional level of organization and rigidity and in establishing mitotic chromosome architecture. May promote the resolution of double-strand DNA catenanes (intertwines) between sister chromatids. Condensin-mediated compaction likely increases tension in catenated sister chromatids, providing directionality for type II topoisomerase-mediated strand exchanges toward chromatid decatenation. Required for decatenation of chromatin bridges at anaphase. Early in neurogenesis, may play an essential role to ensure accurate mitotic chromosome condensation in neuron stem cells, ultimately affecting neuron pool and cortex size. Seems to have lineage-specific role in T-cell development. The protein is Condensin-2 complex subunit H2 (NCAPH2) of Bos taurus (Bovine).